A 232-amino-acid chain; its full sequence is Charged multivesicular body protein 4c (232 aa).

2 disordered regions span residues 1 to 23 (MSKL…PSAQ) and 177 to 232 (NKKM…AWAT). The tract at residues 1–153 (MSKLGKFFKG…EISEAFSQRV (153 aa)) is intramolecular interaction with C-terminus. Coiled-coil stretches lie at residues 21-45 (SAQE…YLEN) and 125-185 (LNKI…SLEL). Residues 154 to 232 (QFADGFDEAE…DFKQLAAWAT (79 aa)) form an intramolecular interaction with N-terminus region. Position 210 is a phosphoserine; by AURKB (S210).

The protein belongs to the SNF7 family. As to quaternary structure, probable core component of the endosomal sorting required for transport complex III (ESCRT-III). ESCRT-III components are thought to multimerize to form a flat lattice on the perimeter membrane of the endosome. Several assembly forms of ESCRT-III may exist that interact and act sequentially. Self-associates. Interacts with CHMP2A. Interacts with CHMP4A. Interacts with CHMP4B. Interacts with CHMP6. Interacts with VPS4A. Interacts with PDCD6IP; the interaction is direct. In terms of processing, phosphorylated at Ser-210 by AURKB during cytokinesis: together with ZFYVE19/ANCHR, phosphorylated CHMP4C retains abscission-competent VPS4 (VPS4A and/or VPS4B) at the midbody ring until abscission checkpoint signaling is terminated at late cytokinesis.

The protein localises to the cytoplasm. It is found in the cytosol. Its subcellular location is the late endosome membrane. The protein resides in the midbody. It localises to the midbody ring. Functionally, probable core component of the endosomal sorting required for transport complex III (ESCRT-III) which is involved in multivesicular bodies (MVBs) formation and sorting of endosomal cargo proteins into MVBs. MVBs contain intraluminal vesicles (ILVs) that are generated by invagination and scission from the limiting membrane of the endosome and mostly are delivered to lysosomes enabling degradation of membrane proteins, such as stimulated growth factor receptors, lysosomal enzymes and lipids. The MVB pathway appears to require the sequential function of ESCRT-O, -I,-II and -III complexes. ESCRT-III proteins mostly dissociate from the invaginating membrane before the ILV is released. The ESCRT machinery also functions in topologically equivalent membrane fission events, such as the terminal stages of cytokinesis. Key component of the cytokinesis checkpoint, a process required to delay abscission to prevent both premature resolution of intercellular chromosome bridges and accumulation of DNA damage: upon phosphorylation by AURKB, together with ZFYVE19/ANCHR, retains abscission-competent VPS4 (VPS4A and/or VPS4B) at the midbody ring until abscission checkpoint signaling is terminated at late cytokinesis. Deactivation of AURKB results in dephosphorylation of CHMP4C followed by its dissociation from ANCHR and VPS4 and subsequent abscission. ESCRT-III proteins are believed to mediate the necessary vesicle extrusion and/or membrane fission activities, possibly in conjunction with the AAA ATPase VPS4. CHMP4A/B/C are required for the exosomal release of SDCBP, CD63 and syndecan. This chain is Charged multivesicular body protein 4c (Chmp4c), found in Mus musculus (Mouse).